We begin with the raw amino-acid sequence, 724 residues long: Small conductance calcium-activated potassium channel protein 3 (724 aa).

The span at 1 to 11 shows a compositional bias: basic and acidic residues; it reads MDTSGHFHDSG. Disordered regions lie at residues 1–161 and 232–251; these read MDTS…RDSN and ATHN…FPKA. Residues 34–58 show a composition bias toward pro residues; the sequence is QPPPPPPPPAPPAAPQQPPGPPLQP. Positions 59-88 are enriched in low complexity; the sequence is QPLQLQQQQQQQQQQPPHPLSQLAQLQSQP. A compositionally biased stretch (polar residues) spans 105–125; the sequence is PSSNSTAILHPSSRQGSQLNL. Residues 131 to 140 show a composition bias toward low complexity; sequence GHSPSSTATS. Residue Ser160 is modified to Phosphoserine. The span at 232 to 249 shows a compositional bias: polar residues; sequence ATHNHQHAGTTASSTTFP. Residues 281–301 form a helical membrane-spanning segment; sequence LIFGMFGIVVMVIETELSWGL. A helical transmembrane segment spans residues 308–328; the sequence is FSLALKCLISLSTIILLGLII. A helical transmembrane segment spans residues 359 to 379; the sequence is ISLEMLVCAIHPIPGEYKFFW. A helical transmembrane segment spans residues 398-418; that stretch reads IILSIPMFLRLYLIARVMLLH. A helical transmembrane segment spans residues 447 to 467; the sequence is LMTICPGTVLLVFSISLWIIA. The pore-forming intramembrane region spans 487 to 507; the sequence is FLGAMWLISITFLSIGYGDMV. The helical transmembrane segment at 516–536 threads the bilayer; it reads VCLLTGIMGAGCTALVVAVVA. A calmodulin-binding region spans residues 554 to 630; that stretch reads DTQLTKRIKN…LVDLSKMQNV (77 aa). A coiled-coil region spans residues 635-662; the sequence is ITELNDRSEDLEKQIGSLESKLEHLTAS. Residues 702 to 724 are disordered; sequence LSDSPIGVSSTSFPTPYTSSSSC. The segment covering 710–724 has biased composition (low complexity); sequence SSTSFPTPYTSSSSC.

It belongs to the potassium channel KCNN family. KCa2.3/KCNN3 subfamily. As to quaternary structure, homodimer. Heteromultimer with KCNN2 or KCNN1; this modulates plasma membrane expression and consequently the small conductance calcium-activated potassium channel activity. The complex is composed of 4 channel subunits each of which binds to a calmodulin subunit which regulates the channel activity through calcium-binding. Interacts with CALM1.

Its subcellular location is the cell membrane. It localises to the cytoplasm. The protein resides in the myofibril. The protein localises to the sarcomere. It is found in the z line. It carries out the reaction K(+)(in) = K(+)(out). Inhibited by bee venom neurotoxin apamin. In terms of biological role, small conductance calcium-activated potassium channel that mediates the voltage-independent transmembrane transfer of potassium across the cell membrane through a constitutive interaction with calmodulin which binds the intracellular calcium allowing its opening. The current is characterized by a voltage-independent activation, an intracellular calcium concentration increase-dependent activation and a single-channel conductance of 10 picosiemens. Also presents an inwardly rectifying current, thus reducing its already small outward conductance of potassium ions, which is particularly the case when the membrane potential displays positive values, above + 20 mV. Activation is followed by membrane hyperpolarization. Thought to regulate neuronal excitability by contributing to the slow component of synaptic afterhyperpolarization. The polypeptide is Small conductance calcium-activated potassium channel protein 3 (Sus scrofa (Pig)).